The following is a 1486-amino-acid chain: Alsin homolog (1486 aa).

RCC1 repeat units lie at residues 147–201, 256–307, and 308–363; these read QGVV…MLVA, HTQL…ARTL, and DGRL…LLNA. MORN repeat units follow at residues 744–765, 766–784, 789–804, 817–832, 839–853, and 863–884; these read CGTW…DGSV, YCGE…MVIP, YVGN…HGVY, YEGN…HGVM, YVGE…GYGV, and YMGM…NRGD. A VPS9 domain is found at 1333–1486; that stretch reads SRKDEMYRQN…VTSRALQKIP (154 aa).

In the embryo, expressed in a wide range of tissues including the epidermis and the ventral nerve cord.

Functionally, has guanine nucleotide exchange factor (GEF) activity towards Rab5. Promotes the exchange of GDP to GTP, converting inactive GDP-bound Rab5 into its active GTP-bound form. This is Alsin homolog from Drosophila melanogaster (Fruit fly).